The following is a 365-amino-acid chain: Alanine racemase (365 aa).

Catalysis depends on Lys-32, which acts as the Proton acceptor; specific for D-alanine. The residue at position 32 (Lys-32) is an N6-(pyridoxal phosphate)lysine. Arg-128 lines the substrate pocket. The Proton acceptor; specific for L-alanine role is filled by Tyr-257. A substrate-binding site is contributed by Met-305.

Belongs to the alanine racemase family. Pyridoxal 5'-phosphate is required as a cofactor.

It catalyses the reaction L-alanine = D-alanine. It participates in amino-acid biosynthesis; D-alanine biosynthesis; D-alanine from L-alanine: step 1/1. Functionally, catalyzes the interconversion of L-alanine and D-alanine. May also act on other amino acids. The protein is Alanine racemase (alr) of Francisella tularensis subsp. holarctica (strain OSU18).